The chain runs to 267 residues: Glutamate 5-kinase (267 aa).

Residue lysine 15 participates in ATP binding. Substrate contacts are provided by serine 55, aspartate 142, and asparagine 158. ATP is bound by residues 178-179 and 220-226; these read SD and TGGMATK.

It belongs to the glutamate 5-kinase family.

Its subcellular location is the cytoplasm. The enzyme catalyses L-glutamate + ATP = L-glutamyl 5-phosphate + ADP. Its pathway is amino-acid biosynthesis; L-proline biosynthesis; L-glutamate 5-semialdehyde from L-glutamate: step 1/2. In terms of biological role, catalyzes the transfer of a phosphate group to glutamate to form L-glutamate 5-phosphate. The protein is Glutamate 5-kinase of Ligilactobacillus salivarius (strain UCC118) (Lactobacillus salivarius).